A 354-amino-acid chain; its full sequence is Uroporphyrinogen decarboxylase (354 aa).

Substrate-binding positions include 27 to 31, Asp-77, Tyr-154, Ser-209, and His-327; that span reads RQAGR.

This sequence belongs to the uroporphyrinogen decarboxylase family. As to quaternary structure, homodimer.

Its subcellular location is the cytoplasm. The enzyme catalyses uroporphyrinogen III + 4 H(+) = coproporphyrinogen III + 4 CO2. It participates in porphyrin-containing compound metabolism; protoporphyrin-IX biosynthesis; coproporphyrinogen-III from 5-aminolevulinate: step 4/4. Its function is as follows. Catalyzes the decarboxylation of four acetate groups of uroporphyrinogen-III to yield coproporphyrinogen-III. The polypeptide is Uroporphyrinogen decarboxylase (Shewanella denitrificans (strain OS217 / ATCC BAA-1090 / DSM 15013)).